Reading from the N-terminus, the 269-residue chain is Voltage-gated hydrogen channel 1 (269 aa).

The Cytoplasmic segment spans residues 1-96 (MTSHDPKAVT…RLRKLFSSHR (96 aa)). At Thr-29 the chain carries Phosphothreonine. The interval 46–79 (ENEEEEEEPAPTSAEGEGNAEGPDAEAGSASTPR) is disordered. Residue Ser-93 is modified to Phosphoserine. The helical transmembrane segment at 97–117 (FQVIIICLVVLDALLVLAELL) threads the bilayer. Topologically, residues 118–134 (LDLKIIEPDEQDYAVTA) are extracellular. A helical transmembrane segment spans residues 135–157 (FHYMSFAILVFFMLEIFFKIFVF). Residues 158–165 (RLEFFHHK) are Cytoplasmic-facing. Residues 166–186 (FEILDAFVVVVSFVLDLVLLF) form a helical membrane-spanning segment. Over 187–193 (KSHHFEA) the chain is Extracellular. The helical transmembrane segment at 194 to 214 (LGLLILLRLWRVARIINGIII) threads the bilayer. At 215-269 (SVKTRSERQILRLKQINIQLATKIQHLEFSCSEKEQEIERLNKLLKQNGLLGDVN) the chain is on the cytoplasmic side. Residues 221-261 (ERQILRLKQINIQLATKIQHLEFSCSEKEQEIERLNKLLKQ) are a coiled coil.

The protein belongs to the voltage-gated proton channel (VPC) (TC 1.A.51) family. In terms of assembly, homodimer; each protomer forms its own proton conduction pathway. In terms of processing, phosphorylated in vitro by PRKCD. Phosphorylation may enhance channel gating. In terms of tissue distribution, enriched in immune tissues, such as bone marrow, macrophages and spleen.

It is found in the cell membrane. It localises to the apical cell membrane. The protein resides in the cytoplasmic vesicle. Its subcellular location is the phagosome membrane. The protein localises to the cell projection. It is found in the cilium. It localises to the flagellum membrane. The catalysed reaction is H(+)(in) = H(+)(out). The dimers display cooperative channel gating. The channel activity is inhibited by zinc ions. In terms of biological role, voltage-gated proton-selective channel that conducts outward proton currents in response to intracellular acidification. Lacks a canonical ion-channel pore domain and mediates proton permeability via its voltage sensor domain. Provides for proton efflux that compensates for electron charge generated by NADPH oxidase activity either in the extracellular or phagosomal compartments, thus enabling the production of high levels of bactericidal reactive oxygen species during the respiratory burst. Opens when the pH of airway surface liquid exceeds 7 and contributes to respiratory epithelial acid secretion to maintain pH in the mucosa. This chain is Voltage-gated hydrogen channel 1, found in Mus musculus (Mouse).